The sequence spans 148 residues: L-alanine exporter AlaE (148 aa).

4 helical membrane passes run 18–38, 49–69, 88–108, and 115–135; these read FALVVYCFVIGMIIEIVISGM, VSIPVNILIAWPYGLYRDAFI, LLAYVSFQSPVYALILWSVGA, and TAVASNALVSMAMGVAYGYFL.

It belongs to the AlaE exporter family.

It is found in the cell inner membrane. Functionally, exports L-alanine. This Yersinia enterocolitica subsp. palearctica serotype O:3 (strain DSM 13030 / CIP 106945 / Y11) protein is L-alanine exporter AlaE.